The sequence spans 941 residues: Zinc finger protein 507 (941 aa).

Ser-95 carries the phosphoserine modification. 2 C2H2-type zinc fingers span residues 122 to 144 and 152 to 175; these read YQCSLCKFLSPSFSVLKEHVKQH and LMCSECHATSRSQQELEAHVVSEH. Residues 165–177 are compositionally biased toward basic and acidic residues; sequence QELEAHVVSEHEN. Positions 165–198 are disordered; that stretch reads QELEAHVVSEHENSASSQARSSPSGQGATERKSE. Positions 178–192 are enriched in low complexity; that stretch reads SASSQARSSPSGQGA. The C2H2-type 3 zinc finger occupies 237 to 259; that stretch reads YRCLFCSYTCGQQRMLKTHAWKH. Residue Ser-415 is modified to Phosphoserine. Residues 455-477 form a disordered region; that stretch reads ELSKGLAPDENAPPGRRRTNSES. 5 C2H2-type zinc fingers span residues 630–652, 658–680, 686–709, 746–768, and 774–796; these read YRCRLCNYSSGNRGYIKQHLRVH, YQCPICEHIAENSKDLESHMINH, HQCKQCKESFHYKSQLRNHEREQH, YRCDVCDYTSTTYVGVRNHRRVH, and YRCSLCGYVCSHPPSLKSHMWKH. The disordered stretch occupies residues 823–856; it reads GKSRGKPLLTSSEERTGPTTGSPENLVSSSELTS. Residues 839-856 show a composition bias toward polar residues; it reads GPTTGSPENLVSSSELTS. The segment at 899–921 adopts a C2H2-type 9 zinc-finger fold; it reads FCCCICGFESTSKESLLDHMKEH.

Belongs to the krueppel C2H2-type zinc-finger protein family.

The protein localises to the nucleus. May be involved in transcriptional regulation. The sequence is that of Zinc finger protein 507 (Znf507) from Mus musculus (Mouse).